The sequence spans 87 residues: Small ribosomal subunit protein bS21m (87 aa).

This sequence belongs to the bacterial ribosomal protein bS21 family. In terms of assembly, component of the mitochondrial ribosome small subunit (28S) which comprises a 12S rRNA and about 30 distinct proteins.

The protein resides in the mitochondrion. The sequence is that of Small ribosomal subunit protein bS21m (Mrps21) from Mus musculus (Mouse).